A 310-amino-acid polypeptide reads, in one-letter code: Spermatid maturation protein 1 (310 aa).

The chain crosses the membrane as a helical span at residues 29–49 (ILLLLGLIVCINIGINLVTLL). The tract at residues 215–238 (ALSHKNNAAGSGGCVEGEQAQGQP) is disordered. Residues 262 to 286 (VYDARDVRRRLRELTQEVEALSHCY) adopt a coiled-coil conformation.

As to expression, testis-specific. Exclusively present in cytoplasm of steps 14-16 elongated spermatids (at protein level).

It is found in the membrane. The protein localises to the cytoplasm. In terms of biological role, required for proper cytoplasm removal during spermatogenesis. This chain is Spermatid maturation protein 1 (Spem1), found in Mus musculus (Mouse).